The chain runs to 168 residues: Peptide deformylase (168 aa).

Fe cation-binding residues include C92 and H134. E135 is an active-site residue. A Fe cation-binding site is contributed by H138.

Belongs to the polypeptide deformylase family. Requires Fe(2+) as cofactor.

The catalysed reaction is N-terminal N-formyl-L-methionyl-[peptide] + H2O = N-terminal L-methionyl-[peptide] + formate. Removes the formyl group from the N-terminal Met of newly synthesized proteins. Requires at least a dipeptide for an efficient rate of reaction. N-terminal L-methionine is a prerequisite for activity but the enzyme has broad specificity at other positions. In Hahella chejuensis (strain KCTC 2396), this protein is Peptide deformylase.